Reading from the N-terminus, the 284-residue chain is D-tagatose-1,6-bisphosphate aldolase subunit GatY (284 aa).

Catalysis depends on Asp82, which acts as the Proton donor. Zn(2+)-binding residues include His83 and His180. Position 181 (Gly181) interacts with dihydroxyacetone phosphate. Residue His208 participates in Zn(2+) binding. Residues 209 to 211 (GAS) and 230 to 233 (NVAT) each bind dihydroxyacetone phosphate.

It belongs to the class II fructose-bisphosphate aldolase family. TagBP aldolase GatY subfamily. Forms a complex with GatZ. Zn(2+) serves as cofactor.

It catalyses the reaction D-tagatofuranose 1,6-bisphosphate = D-glyceraldehyde 3-phosphate + dihydroxyacetone phosphate. It functions in the pathway carbohydrate metabolism; D-tagatose 6-phosphate degradation; D-glyceraldehyde 3-phosphate and glycerone phosphate from D-tagatose 6-phosphate: step 2/2. In terms of biological role, catalytic subunit of the tagatose-1,6-bisphosphate aldolase GatYZ, which catalyzes the reversible aldol condensation of dihydroxyacetone phosphate (DHAP or glycerone-phosphate) with glyceraldehyde 3-phosphate (G3P) to produce tagatose 1,6-bisphosphate (TBP). Requires GatZ subunit for full activity and stability. Is involved in the catabolism of galactitol. This chain is D-tagatose-1,6-bisphosphate aldolase subunit GatY, found in Salmonella choleraesuis (strain SC-B67).